Here is a 317-residue protein sequence, read N- to C-terminus: Peroxisome biogenesis protein 7 (317 aa).

6 WD repeats span residues 58–98 (DTAD…PSNP), 104–144 (EHAR…SVRT), 147–187 (EHAY…STMI), 190–230 (AHDF…VPLA), 234–274 (GHGY…ALVG), and 278–317 (HHTE…PRAS).

It belongs to the WD repeat peroxin-7 family. As to quaternary structure, interacts with PEX5; interaction only takes place when PEX7 is associated with cargo proteins. Interacts with PEX13 (via N-terminus) and PEX12 (via C-terminus), but not with PEX14. As to expression, expressed in siliques and leaves, but barely detectable in flowers, stems and roots.

It localises to the cytoplasm. It is found in the cytosol. The protein localises to the peroxisome matrix. Functionally, receptor required for the peroxisomal import of proteins containing a C-terminal PTS2-type peroxisomal targeting signal. Specifically binds to cargo proteins containing a PTS2 peroxisomal targeting signal in the cytosol. Cargo protein-binding triggers interaction with PEX5 and formation of a ternary complex composed of PEX5 and PEX7 along with PTS2-containing cargo proteins, which is tranlocated into peroxisomes by passing through the PEX13-PEX14 docking complex. In Arabidopsis thaliana (Mouse-ear cress), this protein is Peroxisome biogenesis protein 7 (PEX7).